The primary structure comprises 75 residues: Notewaprin-b (75 aa).

The first 24 residues, Met-1–Ser-24, serve as a signal peptide directing secretion. Positions Arg-27–Ile-72 constitute a WAP domain. Cystine bridges form between Cys-34–Cys-60, Cys-43–Cys-64, Cys-47–Cys-59, and Cys-53–Cys-68.

It belongs to the venom waprin family. As to expression, expressed by the venom gland.

The protein localises to the secreted. In terms of biological role, damages membranes of susceptible bacteria. Has no hemolytic activity. Not toxic to mice. Does not inhibit the proteinases elastase and cathepsin G. The sequence is that of Notewaprin-b from Notechis scutatus scutatus (Mainland tiger snake).